Here is a 412-residue protein sequence, read N- to C-terminus: Glucose-1-phosphate adenylyltransferase (412 aa).

Residues tyrosine 98, glycine 163, glutamate 178–lysine 179, and serine 189 contribute to the alpha-D-glucose 1-phosphate site.

The protein belongs to the bacterial/plant glucose-1-phosphate adenylyltransferase family. As to quaternary structure, homotetramer.

It catalyses the reaction alpha-D-glucose 1-phosphate + ATP + H(+) = ADP-alpha-D-glucose + diphosphate. It functions in the pathway glycan biosynthesis; glycogen biosynthesis. Functionally, involved in the biosynthesis of ADP-glucose, a building block required for the elongation reactions to produce glycogen. Catalyzes the reaction between ATP and alpha-D-glucose 1-phosphate (G1P) to produce pyrophosphate and ADP-Glc. The sequence is that of Glucose-1-phosphate adenylyltransferase from Thermosipho melanesiensis (strain DSM 12029 / CIP 104789 / BI429).